A 371-amino-acid polypeptide reads, in one-letter code: MLNEFIAIRRDLHQIPETGYKELKTQAYLLDYISKLPNEFLEIKKWRTGILVLVKGTNPGKTIGYRTDIDALPITEETGLPFESKHAGNMHACGHDLHMSIALGVLTHFASKPAKDNLLFVFQPAEEGPGGAKPIMESAEFSEWRPDTIYGLHIAPEYKVGQIAIKPGLLFANTSELFISFKGKGGHAAYPHLANDMVVAASAFVGQMQTIISRNIDPMDSAVITIGRIHGGEIQNVIAETAFLDGTIRTLSPETMEIVWTRLKQLAKGWEEAYQCEVEFHPGSDYYQVDNDPVETEEFIHFLEEQYPESYVPARSAMTGEDFGYFLSEIKGFMFWLGVDSEYSLHHAKLSPKEEAIPFAIDVLVNFLESK.

D68 is a catalytic residue. The active-site Proton acceptor is the E127.

This sequence belongs to the peptidase M20A family. N-acetyldiaminopimelate deacetylase subfamily.

The catalysed reaction is N-acetyl-(2S,6S)-2,6-diaminopimelate + H2O = (2S,6S)-2,6-diaminopimelate + acetate. Its pathway is amino-acid biosynthesis; L-lysine biosynthesis via DAP pathway; LL-2,6-diaminopimelate from (S)-tetrahydrodipicolinate (acetylase route): step 3/3. Functionally, catalyzes the conversion of N-acetyl-diaminopimelate to diaminopimelate and acetate. In Listeria innocua serovar 6a (strain ATCC BAA-680 / CLIP 11262), this protein is N-acetyldiaminopimelate deacetylase.